The following is a 253-amino-acid chain: Chitooligosaccharide deacetylase (253 aa).

Mg(2+)-binding residues include His61 and His126.

Belongs to the YdjC deacetylase family. ChbG subfamily. As to quaternary structure, homodimer. Mg(2+) is required as a cofactor.

Its subcellular location is the cytoplasm. The enzyme catalyses N,N'-diacetylchitobiose + H2O = N-acetyl-beta-D-glucosaminyl-(1-&gt;4)-D-glucosamine + acetate. The catalysed reaction is diacetylchitobiose-6'-phosphate + H2O = N'-monoacetylchitobiose-6'-phosphate + acetate. It participates in glycan degradation; chitin degradation. Functionally, involved in the degradation of chitin. ChbG is essential for growth on the acetylated chitooligosaccharides chitobiose and chitotriose but is dispensable for growth on cellobiose and chitosan dimer, the deacetylated form of chitobiose. Deacetylation of chitobiose-6-P and chitotriose-6-P is necessary for both the activation of the chb promoter by the regulatory protein ChbR and the hydrolysis of phosphorylated beta-glucosides by the phospho-beta-glucosidase ChbF. Catalyzes the removal of only one acetyl group from chitobiose-6-P to yield monoacetylchitobiose-6-P, the inducer of ChbR and the substrate of ChbF. This chain is Chitooligosaccharide deacetylase, found in Yersinia pseudotuberculosis serotype O:1b (strain IP 31758).